The sequence spans 328 residues: Tetraacyldisaccharide 4'-kinase (328 aa).

55–62 (TAGGNGKT) contributes to the ATP binding site.

It belongs to the LpxK family.

The enzyme catalyses a lipid A disaccharide + ATP = a lipid IVA + ADP + H(+). It functions in the pathway glycolipid biosynthesis; lipid IV(A) biosynthesis; lipid IV(A) from (3R)-3-hydroxytetradecanoyl-[acyl-carrier-protein] and UDP-N-acetyl-alpha-D-glucosamine: step 6/6. Transfers the gamma-phosphate of ATP to the 4'-position of a tetraacyldisaccharide 1-phosphate intermediate (termed DS-1-P) to form tetraacyldisaccharide 1,4'-bis-phosphate (lipid IVA). The chain is Tetraacyldisaccharide 4'-kinase from Escherichia coli O157:H7.